The chain runs to 168 residues: MSSVVFASARLNATNQSYLPVPITLATAYEMQHGDSLRLKTSHGLKIKIRIKEAASTLYMTTGWKEFAEATGLETGETILFRMSSRSKARVMLLNRQCLIRCPVKTPSTTSSDKNRSLSPSDQLTRASTSAHPSTSKSIPPLRNGTGSTKRSIADTSFCHQLKLTAEN.

Residues 4–97 (VVFASARLNA…KARVMLLNRQ (94 aa)) constitute a DNA-binding region (TF-B3). Positions 105–151 (KTPSTTSSDKNRSLSPSDQLTRASTSAHPSTSKSIPPLRNGTGSTKR) are disordered. Residues 106–138 (TPSTTSSDKNRSLSPSDQLTRASTSAHPSTSKS) show a composition bias toward polar residues.

The protein localises to the nucleus. This Oryza sativa subsp. japonica (Rice) protein is Putative B3 domain-containing protein Os10g0158600.